Consider the following 333-residue polypeptide: MASQNTEQEYEAKLAPSVGGEPTSGGPSGSSPDPNPDSSEVLDRHEDQAMSQDPGSQDNSPPEDRNQRVVNVEDNHNLFRLSFPRKLWTIVEEDTFKSVSWNDDGDAVIIDKDLFQREVLQRKGAERIFKTDNLTSFIRQLNLYGFCKTRPSNSPGNKKMMIYCNSNFQRDKPRLLENIQRKDALRNTAQQATRVPTPKRKNLVATRRSLRIYHINARKEAIKMCQQGAPSVQGPSGTQSFRRSGMWSKKSATRHPLGNGPPQEPNGPSWEGTSGNVTFTSSATTWMEGTGILSSLVYSDNGSVMSLYNICYYALLASLSVMSPNEPSDDEEE.

The segment at 1–66 (MASQNTEQEY…QDNSPPEDRN (66 aa)) is disordered. Over residues 29-39 (GSSPDPNPDSS) the composition is skewed to low complexity. Residues 49–60 (AMSQDPGSQDNS) are compositionally biased toward polar residues. Residues 79–182 (FRLSFPRKLW…PRLLENIQRK (104 aa)) mediate DNA binding. A disordered region spans residues 227-275 (QGAPSVQGPSGTQSFRRSGMWSKKSATRHPLGNGPPQEPNGPSWEGTSG). Over residues 228–242 (GAPSVQGPSGTQSFR) the composition is skewed to polar residues.

Belongs to the HSF family.

Its subcellular location is the nucleus. The chain is Heat shock transcription factor, X-linked member 4 from Homo sapiens (Human).